The following is a 384-amino-acid chain: BarH-like 2 homeobox protein (384 aa).

3 disordered regions span residues Met1 to Thr134, Cys154 to Ala235, and Pro364 to Arg384. Composition is skewed to low complexity over residues Val101 to Pro110 and Gln119 to Thr134. Positions Tyr157–Ala175 are enriched in polar residues. Basic and acidic residues predominate over residues Glu177–Ser217. The homeobox DNA-binding region spans Pro229–Thr288.

This sequence belongs to the BAR homeobox family.

Its subcellular location is the nucleus. In terms of biological role, potential regulator of neural basic helix-loop-helix genes. It may down-regulate expression of ASCL1 and, within the thalamus, up-regulate NGN2, thereby regulating distinct patterns of neuronal differentiation. The sequence is that of BarH-like 2 homeobox protein (Barhl2) from Mus musculus (Mouse).